Reading from the N-terminus, the 252-residue chain is TVP38/TMEM64 family membrane protein Mb1528c (252 aa).

The next 6 membrane-spanning stretches (helical) occupy residues 32-52 (IVGTVVGITVLVVVALLVPVP), 64-84 (LGAWFPLAFLLVHTVVTVPPF), 88-108 (AFTLAAGLLFGSVVGVFIAVV), 149-169 (WLAILSLRLIPVVPFAAINYA), 177-197 (ILSFAWATLAGLLPGTAAVVI), and 209-229 (LLILVSVCTGALGLTGLVYEI).

Belongs to the TVP38/TMEM64 family.

Its subcellular location is the cell membrane. The chain is TVP38/TMEM64 family membrane protein Mb1528c from Mycobacterium bovis (strain ATCC BAA-935 / AF2122/97).